The sequence spans 98 residues: Large ribosomal subunit protein uL23 (98 aa).

This sequence belongs to the universal ribosomal protein uL23 family. As to quaternary structure, part of the 50S ribosomal subunit. Contacts protein L29, and trigger factor when it is bound to the ribosome.

Functionally, one of the early assembly proteins it binds 23S rRNA. One of the proteins that surrounds the polypeptide exit tunnel on the outside of the ribosome. Forms the main docking site for trigger factor binding to the ribosome. The sequence is that of Large ribosomal subunit protein uL23 from Lactobacillus johnsonii (strain CNCM I-12250 / La1 / NCC 533).